Here is a 264-residue protein sequence, read N- to C-terminus: Tetraspanin-12 (264 aa).

At Met1–Asn13 the chain is on the cytoplasmic side. The chain crosses the membrane as a helical span at residues Ala14 to Gly34. At Pro35–Pro45 the chain is on the extracellular side. A helical membrane pass occupies residues Leu46–Tyr66. Topologically, residues Gly67 to Tyr75 are cytoplasmic. Residues Leu76–Val96 traverse the membrane as a helical segment. The Extracellular portion of the chain corresponds to Thr97–Arg228. N-linked (GlcNAc...) asparagine glycosylation occurs at Asn180. Residues Ile229–Cys249 traverse the membrane as a helical segment. Over Cys250–Phe264 the chain is Cytoplasmic.

Belongs to the tetraspanin (TM4SF) family.

The protein resides in the membrane. May be involved in the regulation of cell differentiation. The protein is Tetraspanin-12 (TET12) of Arabidopsis thaliana (Mouse-ear cress).